The chain runs to 477 residues: Zinc metalloproteinase/disintegrin (477 aa).

The N-terminal stretch at 1-19 is a signal peptide; the sequence is MIQVLLVIICLAVPYQGSS. The propeptide occupies 20 to 186; it reads IILESGNVND…PIKKASQSNL (167 aa). One can recognise a Peptidase M12B domain in the interval 192–388; sequence RYIELVIVAD…QKPQCILNKP (197 aa). Residues Glu-195 and Asp-279 each coordinate Ca(2+). Disulfide bonds link Cys-303–Cys-383, Cys-343–Cys-367, and Cys-345–Cys-350. His-328 is a binding site for Zn(2+). Glu-329 is a catalytic residue. Residues His-332 and His-338 each contribute to the Zn(2+) site. 2 residues coordinate Ca(2+): Cys-383 and Asn-386. Positions 389–404 are excised as a propeptide; sequence LRTDTVSTPVSGNELL. Positions 396-477 constitute a Disintegrin domain; that stretch reads TPVSGNELLE…AGCPRNPFHA (82 aa). 6 disulfide bridges follow: Cys-410/Cys-425, Cys-412/Cys-420, Cys-419/Cys-442, Cys-433/Cys-439, Cys-438/Cys-463, and Cys-451/Cys-470. The short motif at 455 to 457 is the Cell attachment site element; it reads RGD.

This sequence belongs to the venom metalloproteinase (M12B) family. P-II subfamily. P-IIa sub-subfamily. Monomer. The cofactor is Zn(2+). In terms of tissue distribution, expressed by the venom gland.

The protein resides in the secreted. Its function is as follows. Impairs hemostasis in the envenomed animal. Functionally, inhibits platelet aggregation induced by ADP, thrombin, platelet-activating factor and collagen. Acts by inhibiting fibrinogen interaction with platelet receptors GPIIb/GPIIIa (ITGA2B/ITGB3). In Gloydius halys (Chinese water mocassin), this protein is Zinc metalloproteinase/disintegrin.